Reading from the N-terminus, the 226-residue chain is Small ribosomal subunit protein uS3 (226 aa).

The KH type-2 domain maps to 39–107 (VRKFLNKELR…PAQINISEVR (69 aa)).

Belongs to the universal ribosomal protein uS3 family. Part of the 30S ribosomal subunit. Forms a tight complex with proteins S10 and S14.

In terms of biological role, binds the lower part of the 30S subunit head. Binds mRNA in the 70S ribosome, positioning it for translation. This is Small ribosomal subunit protein uS3 from Idiomarina loihiensis (strain ATCC BAA-735 / DSM 15497 / L2-TR).